Reading from the N-terminus, the 122-residue chain is Small ribosomal subunit protein bS6 (122 aa).

The tract at residues 96 to 122 (ETAPSPMMKAVQKEDAAKSHRTEAPAA) is disordered. Basic and acidic residues predominate over residues 106–122 (VQKEDAAKSHRTEAPAA).

It belongs to the bacterial ribosomal protein bS6 family.

In terms of biological role, binds together with bS18 to 16S ribosomal RNA. This chain is Small ribosomal subunit protein bS6, found in Herminiimonas arsenicoxydans.